We begin with the raw amino-acid sequence, 688 residues long: Glycine--tRNA ligase beta subunit (688 aa).

The protein belongs to the class-II aminoacyl-tRNA synthetase family. Tetramer of two alpha and two beta subunits.

The protein localises to the cytoplasm. It catalyses the reaction tRNA(Gly) + glycine + ATP = glycyl-tRNA(Gly) + AMP + diphosphate. The chain is Glycine--tRNA ligase beta subunit from Colwellia psychrerythraea (strain 34H / ATCC BAA-681) (Vibrio psychroerythus).